Consider the following 514-residue polypeptide: Glutamate--cysteine ligase, chloroplastic (514 aa).

A chloroplast-targeting transit peptide spans 1–55 (MALLSQAGGAYTVPSGHVSSRTGTKTVSGCVNVLRMKETYVSSYSRTLSTKSMLK). 2 disulfides stabilise this stretch: cysteine 178–cysteine 398 and cysteine 341–cysteine 356.

Belongs to the carboxylate-amine ligase family. Glutamate--cysteine ligase type 2 subfamily. Homodimer or monomer when oxidized or reduced, respectively. The Cys-178-Cys-398 disulfide bridge is known to modulate the enzyme activity according to the redox status. The oxidized form constitutes the active enzyme.

The protein resides in the plastid. It is found in the chloroplast. It carries out the reaction L-cysteine + L-glutamate + ATP = gamma-L-glutamyl-L-cysteine + ADP + phosphate + H(+). It participates in sulfur metabolism; glutathione biosynthesis; glutathione from L-cysteine and L-glutamate: step 1/2. Functionally, participates in the detoxification process. In Brassica juncea (Indian mustard), this protein is Glutamate--cysteine ligase, chloroplastic (GSH1).